The primary structure comprises 104 residues: ATP-dependent Clp protease adapter protein ClpS (104 aa).

The protein belongs to the ClpS family. In terms of assembly, binds to the N-terminal domain of the chaperone ClpA.

In terms of biological role, involved in the modulation of the specificity of the ClpAP-mediated ATP-dependent protein degradation. This is ATP-dependent Clp protease adapter protein ClpS from Burkholderia thailandensis (strain ATCC 700388 / DSM 13276 / CCUG 48851 / CIP 106301 / E264).